The following is a 188-amino-acid chain: Cytochrome c oxidase assembly protein CtaG (188 aa).

Topologically, residues 1–8 (MSKKSNKN) are cytoplasmic. The chain crosses the membrane as a helical; Signal-anchor for type II membrane protein span at residues 9–31 (LAFSLLGLIISMVLLSFASVPIY). Topologically, residues 32-188 (NLFCKVTGYG…SSLRGNYVSN (157 aa)) are periplasmic.

This sequence belongs to the COX11/CtaG family.

Its subcellular location is the cell inner membrane. In terms of biological role, exerts its effect at some terminal stage of cytochrome c oxidase synthesis, probably by being involved in the insertion of the copper B into subunit I. This is Cytochrome c oxidase assembly protein CtaG from Rickettsia conorii (strain ATCC VR-613 / Malish 7).